The chain runs to 161 residues: Phosphopantetheine adenylyltransferase (161 aa).

S9 is a binding site for substrate. ATP contacts are provided by residues 9-10 (SF) and H17. Residues K41, T73, and R87 each contribute to the substrate site. ATP contacts are provided by residues 88-90 (GLR), E98, and 123-129 (FAHISST).

This sequence belongs to the bacterial CoaD family. Homohexamer. It depends on Mg(2+) as a cofactor.

The protein localises to the cytoplasm. It carries out the reaction (R)-4'-phosphopantetheine + ATP + H(+) = 3'-dephospho-CoA + diphosphate. Its pathway is cofactor biosynthesis; coenzyme A biosynthesis; CoA from (R)-pantothenate: step 4/5. In terms of biological role, reversibly transfers an adenylyl group from ATP to 4'-phosphopantetheine, yielding dephospho-CoA (dPCoA) and pyrophosphate. This is Phosphopantetheine adenylyltransferase from Chloroflexus aggregans (strain MD-66 / DSM 9485).